The chain runs to 373 residues: 4-hydroxy-3-methylbut-2-en-1-yl diphosphate synthase (flavodoxin) (373 aa).

The [4Fe-4S] cluster site is built by Cys-270, Cys-273, Cys-305, and Glu-312.

It belongs to the IspG family. [4Fe-4S] cluster serves as cofactor.

The enzyme catalyses (2E)-4-hydroxy-3-methylbut-2-enyl diphosphate + oxidized [flavodoxin] + H2O + 2 H(+) = 2-C-methyl-D-erythritol 2,4-cyclic diphosphate + reduced [flavodoxin]. It participates in isoprenoid biosynthesis; isopentenyl diphosphate biosynthesis via DXP pathway; isopentenyl diphosphate from 1-deoxy-D-xylulose 5-phosphate: step 5/6. Functionally, converts 2C-methyl-D-erythritol 2,4-cyclodiphosphate (ME-2,4cPP) into 1-hydroxy-2-methyl-2-(E)-butenyl 4-diphosphate. The chain is 4-hydroxy-3-methylbut-2-en-1-yl diphosphate synthase (flavodoxin) from Sodalis glossinidius (strain morsitans).